We begin with the raw amino-acid sequence, 185 residues long: Probable chorismate pyruvate-lyase (185 aa).

3 residues coordinate substrate: Arg80, Leu118, and Glu170.

This sequence belongs to the UbiC family.

It is found in the cytoplasm. The enzyme catalyses chorismate = 4-hydroxybenzoate + pyruvate. It functions in the pathway cofactor biosynthesis; ubiquinone biosynthesis. Its function is as follows. Removes the pyruvyl group from chorismate, with concomitant aromatization of the ring, to provide 4-hydroxybenzoate (4HB) for the ubiquinone pathway. In Pseudomonas putida (strain ATCC 47054 / DSM 6125 / CFBP 8728 / NCIMB 11950 / KT2440), this protein is Probable chorismate pyruvate-lyase.